The chain runs to 343 residues: Heat-inducible transcription repressor HrcA (343 aa).

This sequence belongs to the HrcA family.

Functionally, negative regulator of class I heat shock genes (grpE-dnaK-dnaJ and groELS operons). Prevents heat-shock induction of these operons. The sequence is that of Heat-inducible transcription repressor HrcA from Bacillus velezensis (strain DSM 23117 / BGSC 10A6 / LMG 26770 / FZB42) (Bacillus amyloliquefaciens subsp. plantarum).